Reading from the N-terminus, the 655-residue chain is Probable glucan endo-1,3-beta-glucosidase btgC (655 aa).

Disordered regions lie at residues 1–61 and 89–114; these read MSGD…ATPG and SGVD…PGSD. Residues 1-282 lie on the Cytoplasmic side of the membrane; the sequence is MSGDPRSFSF…PKPGTGSRKR (282 aa). Residues 19–33 show a composition bias toward polar residues; it reads DSSQQPLHPTNTMAD. A compositionally biased stretch (basic and acidic residues) spans 89–98; it reads SGVDAFRDTD. A helical; Signal-anchor for type II membrane protein membrane pass occupies residues 283–303; sequence GWIVGIILAVVIVGAIVGGAV. The Extracellular segment spans residues 304 to 655; that stretch reads GGTLGNREKE…IPDCGGKTAT (352 aa). The segment at 305-338 is disordered; sequence GTLGNREKESPSSSETASGDEKVNGDLGKDSDEI. Basic and acidic residues predominate over residues 323 to 338; the sequence is GDEKVNGDLGKDSDEI. The N-linked (GlcNAc...) asparagine glycan is linked to asparagine 426. The active-site Proton donor is the glutamate 458. Residue glutamate 557 is the Nucleophile of the active site. Residues asparagine 576 and asparagine 602 are each glycosylated (N-linked (GlcNAc...) asparagine).

It belongs to the glycosyl hydrolase 17 family.

Its subcellular location is the cell membrane. It carries out the reaction Hydrolysis of (1-&gt;3)-beta-D-glucosidic linkages in (1-&gt;3)-beta-D-glucans.. In terms of biological role, glucanases play a role in cell expansion during growth, in cell-cell fusion during mating, and in spore release during sporulation. This enzyme may be involved in beta-glucan degradation. Active on laminarin and lichenan. This chain is Probable glucan endo-1,3-beta-glucosidase btgC (btgC), found in Aspergillus terreus (strain NIH 2624 / FGSC A1156).